A 281-amino-acid chain; its full sequence is Ribosomal RNA small subunit methyltransferase A (281 aa).

6 residues coordinate S-adenosyl-L-methionine: N21, L23, G48, E69, D92, and N113.

Belongs to the class I-like SAM-binding methyltransferase superfamily. rRNA adenine N(6)-methyltransferase family. RsmA subfamily.

It is found in the cytoplasm. The catalysed reaction is adenosine(1518)/adenosine(1519) in 16S rRNA + 4 S-adenosyl-L-methionine = N(6)-dimethyladenosine(1518)/N(6)-dimethyladenosine(1519) in 16S rRNA + 4 S-adenosyl-L-homocysteine + 4 H(+). In terms of biological role, specifically dimethylates two adjacent adenosines (A1518 and A1519) in the loop of a conserved hairpin near the 3'-end of 16S rRNA in the 30S particle. May play a critical role in biogenesis of 30S subunits. This is Ribosomal RNA small subunit methyltransferase A from Ralstonia nicotianae (strain ATCC BAA-1114 / GMI1000) (Ralstonia solanacearum).